The chain runs to 335 residues: Probable tRNA N6-adenosine threonylcarbamoyltransferase (335 aa).

Positions 109, 113, and 130 each coordinate a divalent metal cation. Residues 130–134 (YVSGG), Asp-162, Gly-177, Glu-181, and Asn-266 each bind substrate. Asp-294 lines the a divalent metal cation pocket.

This sequence belongs to the KAE1 / TsaD family. As to quaternary structure, component of the EKC/KEOPS complex; the whole complex dimerizes. A divalent metal cation is required as a cofactor.

It localises to the cytoplasm. The protein resides in the nucleus. It catalyses the reaction L-threonylcarbamoyladenylate + adenosine(37) in tRNA = N(6)-L-threonylcarbamoyladenosine(37) in tRNA + AMP + H(+). Its function is as follows. Component of the EKC/KEOPS complex that is required for the formation of a threonylcarbamoyl group on adenosine at position 37 (t(6)A37) in tRNAs that read codons beginning with adenine. The complex is probably involved in the transfer of the threonylcarbamoyl moiety of threonylcarbamoyl-AMP (TC-AMP) to the N6 group of A37. Osgep likely plays a direct catalytic role in this reaction, but requires other protein(s) of the complex to fulfill this activity. This Nematostella vectensis (Starlet sea anemone) protein is Probable tRNA N6-adenosine threonylcarbamoyltransferase.